Consider the following 303-residue polypeptide: Cytidine deaminase (303 aa).

CMP/dCMP-type deaminase domains are found at residues 57-172 (TDKE…YLPD) and 196-303 (ITED…IQVS). 98-100 (NQE) serves as a coordination point for substrate. Histidine 111 provides a ligand contact to Zn(2+). Residue glutamate 113 is the Proton donor of the active site. The Zn(2+) site is built by cysteine 138 and cysteine 141.

It belongs to the cytidine and deoxycytidylate deaminase family. In terms of assembly, homodimer. Zn(2+) is required as a cofactor.

The enzyme catalyses cytidine + H2O + H(+) = uridine + NH4(+). The catalysed reaction is 2'-deoxycytidine + H2O + H(+) = 2'-deoxyuridine + NH4(+). Its function is as follows. This enzyme scavenges exogenous and endogenous cytidine and 2'-deoxycytidine for UMP synthesis. This is Cytidine deaminase from Histophilus somni (strain 2336) (Haemophilus somnus).